A 336-amino-acid polypeptide reads, in one-letter code: Nitrilase (336 aa).

Residues 5–278 (LKVACVQAAP…EGLLYATLDP (274 aa)) enclose the CN hydrolase domain. Glu45 serves as the catalytic Proton acceptor. Residue Lys127 is the Proton donor of the active site. Cys161 (nucleophile) is an active-site residue.

Belongs to the carbon-nitrogen hydrolase superfamily. Nitrilase family.

It catalyses the reaction a nitrile + 2 H2O = a carboxylate + NH4(+). It carries out the reaction (indol-3-yl)acetonitrile + 2 H2O = (indol-3-yl)acetate + NH4(+). The enzyme catalyses phenylpropanonitrile + 2 H2O = 3-phenylpropanoate + NH4(+). Arylacetonitrilase which is capable of hydrolyzing indole-3-acetonitrile (IAN) to the plant hormone indole-3-acetate (IAA), and allows the plant pathogenic bacterium to use IAN as a sole nitrogen source. Is also able to hydrolyze phenylpropionitrile (PPN), allowing the use of this compound as a sole nitrogen source. This enzyme may represent an additional mechanism for IAA biosynthesis or may be used to degrade and assimilate aldoximes and nitriles produced during host plant secondary metabolism. The chain is Nitrilase from Pseudomonas syringae pv. syringae (strain B728a).